Consider the following 493-residue polypeptide: Glycerol kinase (493 aa).

ADP is bound at residue threonine 13. Residues threonine 13, threonine 14, and serine 15 each coordinate ATP. A sn-glycerol 3-phosphate-binding site is contributed by threonine 13. Arginine 17 provides a ligand contact to ADP. Sn-glycerol 3-phosphate-binding residues include arginine 83, glutamate 84, tyrosine 135, and aspartate 244. Glycerol is bound by residues arginine 83, glutamate 84, tyrosine 135, aspartate 244, and glutamine 245. Positions 266 and 309 each coordinate ADP. Threonine 266, glycine 309, glutamine 313, and glycine 410 together coordinate ATP. ADP is bound by residues glycine 410 and asparagine 414.

This sequence belongs to the FGGY kinase family.

The enzyme catalyses glycerol + ATP = sn-glycerol 3-phosphate + ADP + H(+). It participates in polyol metabolism; glycerol degradation via glycerol kinase pathway; sn-glycerol 3-phosphate from glycerol: step 1/1. With respect to regulation, inhibited by fructose 1,6-bisphosphate (FBP). In terms of biological role, key enzyme in the regulation of glycerol uptake and metabolism. Catalyzes the phosphorylation of glycerol to yield sn-glycerol 3-phosphate. This chain is Glycerol kinase, found in Shewanella halifaxensis (strain HAW-EB4).